Consider the following 191-residue polypeptide: Succinoglycan biosynthesis protein ExoI (191 aa).

The tract at residues 1 to 21 is disordered; the sequence is MTRIKSAVAAGGRRAPHSARL.

It functions in the pathway glycan metabolism; exopolysaccharide biosynthesis. The chain is Succinoglycan biosynthesis protein ExoI (exoI) from Rhizobium meliloti (strain 1021) (Ensifer meliloti).